The primary structure comprises 236 residues: MGNGMTKVLPGLYLGNFIDAKDPDQLGRNKITHIVSIHESPQPLLQDITYLRISVSDTPEVPIKKHFKECVHFIHSCRLNGGNCLVHCFAGISRSTTVVIAYVMTVTGLGWQEVLEAIKASRPIANPNPGFRQQLEEFGWANSQKLRRQLEERFGEIPFRDEEDLRALLPLCRRCRQGPGTSAPSATTASSAASEGTLQRLVPRSPRESHRPLPLLARVKQTFFCLPRCLSRKGGK.

Residue glycine 2 is the site of N-myristoyl glycine attachment. A Tyrosine-protein phosphatase domain is found at 4-144 (GMTKVLPGLY…LEEFGWANSQ (141 aa)). Catalysis depends on cysteine 88, which acts as the Phosphocysteine intermediate. The segment at 178–213 (GPGTSAPSATTASSAASEGTLQRLVPRSPRESHRPL) is disordered. Residues 181 to 194 (TSAPSATTASSAAS) show a composition bias toward low complexity.

Belongs to the protein-tyrosine phosphatase family. Non-receptor class dual specificity subfamily.

It is found in the cell membrane. The enzyme catalyses O-phospho-L-tyrosyl-[protein] + H2O = L-tyrosyl-[protein] + phosphate. It catalyses the reaction O-phospho-L-seryl-[protein] + H2O = L-seryl-[protein] + phosphate. It carries out the reaction O-phospho-L-threonyl-[protein] + H2O = L-threonyl-[protein] + phosphate. In terms of biological role, may play a role in the regulation of oligodendrocyte differentiation. May play a role in the regulation of myelin formation. Involved in the regulation of Erk1/2 phosphorylation in Schwann cells; the signaling may be linked to the regulation of myelination. May dephosphorylate MAPK13, ATF2, ERBB3, PDGFRB and SNX6. The chain is Dual specificity protein phosphatase 15 (Dusp15) from Rattus norvegicus (Rat).